Consider the following 198-residue polypeptide: Probable septum site-determining protein MinC (198 aa).

Belongs to the MinC family. As to quaternary structure, interacts with MinD and FtsZ.

Functionally, cell division inhibitor that blocks the formation of polar Z ring septums. Rapidly oscillates between the poles of the cell to destabilize FtsZ filaments that have formed before they mature into polar Z rings. Prevents FtsZ polymerization. This is Probable septum site-determining protein MinC from Thermosipho melanesiensis (strain DSM 12029 / CIP 104789 / BI429).